Here is a 439-residue protein sequence, read N- to C-terminus: Histidinol dehydrogenase (439 aa).

3 residues coordinate NAD(+): tyrosine 132, glutamine 194, and asparagine 217. Residues serine 244, glutamine 266, and histidine 269 each contribute to the substrate site. Residues glutamine 266 and histidine 269 each coordinate Zn(2+). Active-site proton acceptor residues include glutamate 335 and histidine 336. Substrate contacts are provided by histidine 336, aspartate 369, glutamate 423, and histidine 428. Aspartate 369 provides a ligand contact to Zn(2+). Histidine 428 contributes to the Zn(2+) binding site.

It belongs to the histidinol dehydrogenase family. Zn(2+) is required as a cofactor.

It catalyses the reaction L-histidinol + 2 NAD(+) + H2O = L-histidine + 2 NADH + 3 H(+). The protein operates within amino-acid biosynthesis; L-histidine biosynthesis; L-histidine from 5-phospho-alpha-D-ribose 1-diphosphate: step 9/9. Its function is as follows. Catalyzes the sequential NAD-dependent oxidations of L-histidinol to L-histidinaldehyde and then to L-histidine. In Schizosaccharomyces pombe (strain 972 / ATCC 24843) (Fission yeast), this protein is Histidinol dehydrogenase (his2).